Reading from the N-terminus, the 610-residue chain is Elongation factor 4 (610 aa).

The tr-type G domain occupies 12–194 (EKIRNFSIIA…QIVEKVPAPQ (183 aa)). Residues 24–29 (DHGKST) and 141–144 (NKID) contribute to the GTP site.

The protein belongs to the TRAFAC class translation factor GTPase superfamily. Classic translation factor GTPase family. LepA subfamily.

Its subcellular location is the cell membrane. The enzyme catalyses GTP + H2O = GDP + phosphate + H(+). Functionally, required for accurate and efficient protein synthesis under certain stress conditions. May act as a fidelity factor of the translation reaction, by catalyzing a one-codon backward translocation of tRNAs on improperly translocated ribosomes. Back-translocation proceeds from a post-translocation (POST) complex to a pre-translocation (PRE) complex, thus giving elongation factor G a second chance to translocate the tRNAs correctly. Binds to ribosomes in a GTP-dependent manner. This Streptococcus thermophilus (strain CNRZ 1066) protein is Elongation factor 4.